We begin with the raw amino-acid sequence, 585 residues long: A-type ATP synthase subunit A (585 aa).

G232–T239 provides a ligand contact to ATP.

The protein belongs to the ATPase alpha/beta chains family. As to quaternary structure, has multiple subunits with at least A(3), B(3), C, D, E, F, H, I and proteolipid K(x).

It is found in the cell membrane. The enzyme catalyses ATP + H2O + 4 H(+)(in) = ADP + phosphate + 5 H(+)(out). Functionally, component of the A-type ATP synthase that produces ATP from ADP in the presence of a proton gradient across the membrane. The A chain is the catalytic subunit. This Methanosphaera stadtmanae (strain ATCC 43021 / DSM 3091 / JCM 11832 / MCB-3) protein is A-type ATP synthase subunit A.